The chain runs to 732 residues: Elongation factor 2 (732 aa).

The tr-type G domain occupies 19-260 (ERIRNIGIAA…MVVRHLPSPI (242 aa)). GTP-binding positions include 28 to 35 (AHIDHGKT), 94 to 98 (DTPGH), and 148 to 151 (NKVD). Diphthamide is present on H597.

This sequence belongs to the TRAFAC class translation factor GTPase superfamily. Classic translation factor GTPase family. EF-G/EF-2 subfamily.

It is found in the cytoplasm. Functionally, catalyzes the GTP-dependent ribosomal translocation step during translation elongation. During this step, the ribosome changes from the pre-translocational (PRE) to the post-translocational (POST) state as the newly formed A-site-bound peptidyl-tRNA and P-site-bound deacylated tRNA move to the P and E sites, respectively. Catalyzes the coordinated movement of the two tRNA molecules, the mRNA and conformational changes in the ribosome. The sequence is that of Elongation factor 2 (fusA) from Pyrococcus furiosus (strain ATCC 43587 / DSM 3638 / JCM 8422 / Vc1).